Reading from the N-terminus, the 299-residue chain is Oxygen-dependent coproporphyrinogen-III oxidase (299 aa).

S92 contributes to the substrate binding site. Positions 96 and 106 each coordinate a divalent metal cation. The active-site Proton donor is H106. 108-110 (NVR) is a substrate binding site. A divalent metal cation contacts are provided by H145 and H175. Residues 240–275 (YVEFNLVWDRGTLFGLQTGGRTESILMSMPPLVRWE) are important for dimerization. 258–260 (GGR) is a binding site for substrate.

Belongs to the aerobic coproporphyrinogen-III oxidase family. Homodimer. Requires a divalent metal cation as cofactor.

It localises to the cytoplasm. It catalyses the reaction coproporphyrinogen III + O2 + 2 H(+) = protoporphyrinogen IX + 2 CO2 + 2 H2O. The protein operates within porphyrin-containing compound metabolism; protoporphyrin-IX biosynthesis; protoporphyrinogen-IX from coproporphyrinogen-III (O2 route): step 1/1. In terms of biological role, involved in the heme biosynthesis. Catalyzes the aerobic oxidative decarboxylation of propionate groups of rings A and B of coproporphyrinogen-III to yield the vinyl groups in protoporphyrinogen-IX. The sequence is that of Oxygen-dependent coproporphyrinogen-III oxidase from Klebsiella pneumoniae subsp. pneumoniae (strain ATCC 700721 / MGH 78578).